Here is a 526-residue protein sequence, read N- to C-terminus: Efflux pump aunC (526 aa).

14 consecutive transmembrane segments (helical) span residues 23–43, 64–84, 89–109, 125–145, 155–175, 183–203, 218–238, 254–274, 296–316, 339–359, 360–380, 386–406, 418–438, and 491–511; these read LCYKLVLVTVGLCFCIFCTSL, DVGWYASAYLLTTCAVTLPFG, FFPIKWVYLSALFVFELGSFI, VAGLGGGGLFSGSLLIITQCV, GFIMSIFAVASVIAPLMGGAF, WCFYINLPFGLVSAVVIFFTF, AAGLDPLGTATFLPAIVCLLL, IIALFTLFGVLLACFVGLQLW, LYGFCLNGAMFTFVYYLPIWF, VIFAIISGVLVSATGYFGPFM, LLSAAMASIAAGLLSMLHPSS, IGYQVLLGSSIGMGFQLPVFV, TATALMTFIQLLGGAIFVSVA, and VHTFYLAIGLAAASFLAATVI.

Belongs to the major facilitator superfamily. TCR/Tet family.

It is found in the cell membrane. In terms of biological role, efflux pump; part of the gene cluster that mediates the biosynthesis of aurasperone B, a dimeric gamma-naphthopyrone. The polypeptide is Efflux pump aunC (Aspergillus niger (strain ATCC 1015 / CBS 113.46 / FGSC A1144 / LSHB Ac4 / NCTC 3858a / NRRL 328 / USDA 3528.7)).